The primary structure comprises 877 residues: DNA polymerase I (877 aa).

Positions 180 to 270 (TPAQFIDLKA…EIGLDDTLLK (91 aa)) constitute a 5'-3' exonuclease domain. The 3'-5' exonuclease domain maps to 308–468 (DEIDFEIVTD…AKEKMMAELL (161 aa)).

It belongs to the DNA polymerase type-A family. As to quaternary structure, single-chain monomer with multiple functions.

It catalyses the reaction DNA(n) + a 2'-deoxyribonucleoside 5'-triphosphate = DNA(n+1) + diphosphate. Its function is as follows. In addition to polymerase activity, this DNA polymerase exhibits 3'-5' and 5'-3' exonuclease activity. In Lactococcus lactis subsp. lactis (strain IL1403) (Streptococcus lactis), this protein is DNA polymerase I (polA).